The sequence spans 638 residues: Voltage-gated potassium channel KCNC2 (638 aa).

At 1 to 229 the chain is on the cytoplasmic side; the sequence is MGKIENNERV…EDPYSSRAAR (229 aa). The tract at residues 47–75 is disordered; that stretch reads LTAAGDKLQPLPPPLSPPPRPPPLSPVPS. A compositionally biased stretch (pro residues) spans 56-72; it reads PLPPPLSPPPRPPPLSP. His124, Cys130, Cys151, and Cys152 together coordinate Zn(2+). Residues 230 to 248 traverse the membrane as a helical segment; that stretch reads FIAFASLFFILVSITTFCL. 2 N-linked (GlcNAc...) asparagine glycosylation sites follow: Asn259 and Asn266. The chain crosses the membrane as a helical span at residues 284 to 303; it reads YVEGVCVVWFTFEFLVRIVF. At 304 to 314 the chain is on the cytoplasmic side; sequence SPNKLEFIKNL. The chain crosses the membrane as a helical span at residues 315–337; the sequence is LNIIDFVAILPFYLEVGLSGLSS. A helical; Voltage-sensor transmembrane segment spans residues 346–368; that stretch reads FLRVVRFVRILRIFKLTRHFVGL. At 369–381 the chain is on the cytoplasmic side; that stretch reads RVLGHTLRASTNE. The chain crosses the membrane as a helical span at residues 382–401; that stretch reads FLLLIIFLALGVLIFATMIY. Residues Thr437, Leu438, Gly439, and Tyr440 each contribute to the K(+) site. The short motif at 437 to 442 is the Selectivity filter element; the sequence is TLGYGD. Residues 451-473 form a helical membrane-spanning segment; it reads MLVGALCALAGVLTIAMPVPVIV. Residues 474–638 are Cytoplasmic-facing; that stretch reads NNFGMYYSLA…RSRSPIPSIL (165 aa). A disordered region spans residues 538–572; the sequence is SVLSGDDSTGSEPPLSPPERLPIRRSSTRDKNRRG. Residue Ser564 is modified to Phosphoserine; by PKA. Position 600 is a phosphoserine (Ser600).

The protein belongs to the potassium channel family. C (Shaw) (TC 1.A.1.2) subfamily. Kv3.2/KCNC2 sub-subfamily. As to quaternary structure, homotetramer and heterotetramer with other channel-forming alpha subunits, such as KCNC1. Interacts with KCNC1. Homotetramer or heterotetramer channel activity is regulated by association with modulating ancillary subunits such as KCNE1, KCNE2 and KCNE3, creating a functionally diverse range of channel complexes. Interacts with KCNE1, KCNE2 and KCNE3. Phosphorylated by PKA in cortical synaptosomes. cAMP-dependent phosphorylation inhibits channel activity. Histamine H2 receptor- and PKA-induced phosphorylation extends action potential spike duration, reduces action potential spike amplitude, sustains maximum firing frequency in hippocampal interneurons; also reduces the incidence of high-frequency oscillations in hippocampal CA3 pyramidal cell layers. Expressed in neurons of the visual cortex during postnatal development. Expressed in neurons of the globus pallidus at postnatal age day 7 (P7), onward. Expressed in thalamic relay neurons. Expressed in neurons in layer IV and deeper cortical layers of the neocortex. Expressed in hippocampal interneurons. Expressed in nonpyramidal interneurons in the basolateral amygdala. Expressed in retinal ganglion cells (at protein level). Widely expressed in the brain. Expressed in numerous thalamic relay neurons throughout the dorsal thalamus. Expressed in interneurons of the deep layers V-VI of the cerebral cortex, the CA1 and CA3 pyramidal and dentate gyrus (DG) granule cells of the hippocampus, in neurons of the caudate-putamen, globus pallidus and subthalamic nucleus. Also expressed in the optic layer of interior colliculus, the inferior colliculus, the red nucleus, the medial geniculate, the ventral lateral lemiscus, the reticulotegmental nucleus and in the deep cerebellar nuclei. Expressed in globus pallidus (GP) neurons.

The protein resides in the cell membrane. Its subcellular location is the membrane. It is found in the perikaryon. The protein localises to the cell projection. It localises to the axon. The protein resides in the synapse. Its subcellular location is the synaptosome. It is found in the dendrite. The protein localises to the postsynaptic cell membrane. It localises to the presynaptic cell membrane. The protein resides in the apical cell membrane. Its subcellular location is the basolateral cell membrane. It carries out the reaction K(+)(in) = K(+)(out). Inhibited by Stichodactyla helianthus peptide ShK. Inhibited by millimolar levels of tetraethylammonium (TEA). Contrary to other channels, inhibited only by millimolar levels of 4-aminopyridine (4-AP). Its function is as follows. Voltage-gated potassium channel that mediates transmembrane potassium transport in excitable membranes, primarily in the brain. Contributes to the regulation of the fast action potential repolarization and in sustained high-frequency firing in neurons of the central nervous system. Homotetramer channels mediate delayed-rectifier voltage-dependent potassium currents that activate rapidly at high-threshold voltages and inactivate slowly. Forms tetrameric channels through which potassium ions pass in accordance with their electrochemical gradient. The channel alternates between opened and closed conformations in response to the voltage difference across the membrane. Can form functional homotetrameric channels and heterotetrameric channels that contain variable proportions of KCNC1, and possibly other family members as well; channel properties depend on the type of alpha subunits that are part of the channel. Channel properties may be modulated either by the association with ancillary subunits, such as KCNE1, KCNE2 and KCNE3 or indirectly by nitric oxide (NO) through a cGMP- and PKG-mediated signaling cascade, slowing channel activation and deactivation of delayed rectifier potassium channels. Contributes to fire sustained trains of very brief action potentials at high frequency in retinal ganglion cells, thalamocortical and suprachiasmatic nucleus (SCN) neurons and in hippocampal and neocortical interneurons. Sustained maximal action potential firing frequency in inhibitory hippocampal interneurons is negatively modulated by histamine H2 receptor activation in a cAMP- and protein kinase (PKA) phosphorylation-dependent manner. Plays a role in maintaining the fidelity of synaptic transmission in neocortical GABAergic interneurons by generating action potential (AP) repolarization at nerve terminals, thus reducing spike-evoked calcium influx and GABA neurotransmitter release. Required for long-range synchronization of gamma oscillations over distance in the neocortex. Contributes to the modulation of the circadian rhythm of spontaneous action potential firing in suprachiasmatic nucleus (SCN) neurons in a light-dependent manner. This Rattus norvegicus (Rat) protein is Voltage-gated potassium channel KCNC2.